Here is a 605-residue protein sequence, read N- to C-terminus: Cystathionine gamma-synthase-like enzyme iboG1 (605 aa).

Substrate is bound at residue tyrosine 289. Lysine 393 carries the N6-(pyridoxal phosphate)lysine modification.

It belongs to the trans-sulfuration enzymes family. Requires pyridoxal 5'-phosphate as cofactor.

It participates in secondary metabolite biosynthesis. In terms of biological role, cystathionine gamma-synthase-like enzyme; part of the gene cluster that mediates the biosynthesis of the psychoactive metabolites ibotenic acid and muscimol. The first committed step is glutamate hydroxylation by the 2-oxoglutarate-dependent dioxygenase iboH, and the last step is decarboxylation of ibotenic acid to muscimol by the decarboxylase iboD. The order of the intermediate reactions is somewhat ambiguous. IboA likely activates the carboxylic acid at position 5 to introduce an amide bond, and the flavin monooxygenase iboF generates the N-O bond. There are several options for the latter step. One option is that iboF directly hydroxylates the amide nitrogen formed by iboA to produce a hydroxamic acid species. Another option is that iboF hydroxylates an external N-containing compound, whose resulting N-O bond is subsequently introduced into the hydroxyglutamate scaffold. The paralogous PLP-dependent cystathionine gamma-synthase-like enzymes iboG1 and iboG2 are likely involved in substitution of the OH group at position 3 by the O-N moiety. The first cyclic intermediate is most probably tricholomic acid which is likely desaturated to ibotenic acid by the cytochrome P450 monooxygenase iboC. The sequence is that of Cystathionine gamma-synthase-like enzyme iboG1 (iboG1) from Amanita muscaria (strain Koide BX008).